The following is a 106-amino-acid chain: Malonate decarboxylase acyl carrier protein (106 aa).

S28 is subject to O-(phosphoribosyl dephospho-coenzyme A)serine.

The protein belongs to the MdcC family. In terms of processing, covalently binds the prosthetic group of malonate decarboxylase.

Its subcellular location is the cytoplasm. Subunit of malonate decarboxylase, it is an acyl carrier protein to which acetyl and malonyl thioester residues are bound via a 2'-(5''-phosphoribosyl)-3'-dephospho-CoA prosthetic group and turn over during the catalytic mechanism. The sequence is that of Malonate decarboxylase acyl carrier protein from Stenotrophomonas maltophilia (strain R551-3).